The following is a 359-amino-acid chain: 5-amino-6-(D-ribitylamino)uracil--L-tyrosine 4-hydroxyphenyl transferase (359 aa).

One can recognise a Radical SAM core domain in the interval Val45–Lys282. 3 residues coordinate [4Fe-4S] cluster: Cys59, Cys63, and Cys66.

This sequence belongs to the radical SAM superfamily. CofH family. Consists of two subunits, CofG and CofH. Requires [4Fe-4S] cluster as cofactor.

The enzyme catalyses 5-amino-6-(D-ribitylamino)uracil + L-tyrosine + S-adenosyl-L-methionine = 5-amino-5-(4-hydroxybenzyl)-6-(D-ribitylimino)-5,6-dihydrouracil + 2-iminoacetate + 5'-deoxyadenosine + L-methionine + H(+). It participates in cofactor biosynthesis; coenzyme F0 biosynthesis. Functionally, catalyzes the radical-mediated synthesis of 5-amino-5-(4-hydroxybenzyl)-6-(D-ribitylimino)-5,6-dihydrouracil from 5-amino-6-(D-ribitylamino)uracil and L-tyrosine. The polypeptide is 5-amino-6-(D-ribitylamino)uracil--L-tyrosine 4-hydroxyphenyl transferase (Methanococcus maripaludis (strain C6 / ATCC BAA-1332)).